The primary structure comprises 481 residues: N-succinylglutamate 5-semialdehyde dehydrogenase (481 aa).

Residue 206 to 211 participates in NAD(+) binding; that stretch reads GSARTG. Catalysis depends on residues E229 and C263.

Belongs to the aldehyde dehydrogenase family. AstD subfamily.

It catalyses the reaction N-succinyl-L-glutamate 5-semialdehyde + NAD(+) + H2O = N-succinyl-L-glutamate + NADH + 2 H(+). Its pathway is amino-acid degradation; L-arginine degradation via AST pathway; L-glutamate and succinate from L-arginine: step 4/5. In terms of biological role, catalyzes the NAD-dependent reduction of succinylglutamate semialdehyde into succinylglutamate. This Sphingopyxis alaskensis (strain DSM 13593 / LMG 18877 / RB2256) (Sphingomonas alaskensis) protein is N-succinylglutamate 5-semialdehyde dehydrogenase.